Consider the following 101-residue polypeptide: Gamma-secretase subunit PEN-2 (101 aa).

The Cytoplasmic portion of the chain corresponds to 1–17 (MNLERVSNEEKLNLCRK). Positions 18 to 36 (YYLGGFAFLPFLWLVNIFW) form an intramembrane region, helical. Residues 37–57 (FFREAFLAPAYTEQSQIKGYV) are Cytoplasmic-facing. Residues 58 to 78 (WRSAVGFLFWVIILATWITIF) form a helical membrane-spanning segment. Residues 79 to 101 (QIYRPRWGALGDYLSFTIPLGTP) lie on the Lumenal side of the membrane.

This sequence belongs to the PEN-2 family. The functional gamma-secretase complex is composed of at least four polypeptides: a presenilin homodimer (PSEN1 or PSEN2), nicastrin (NCSTN), APH1 (APH1A or APH1B) and PSENEN.

The protein localises to the endoplasmic reticulum membrane. The protein resides in the golgi apparatus. It is found in the golgi stack membrane. It localises to the cell membrane. Its subcellular location is the membrane. Functionally, essential subunit of the gamma-secretase complex, an endoprotease complex that catalyzes the intramembrane cleavage of integral membrane proteins such as Notch receptors and APP (amyloid-beta precursor protein). The gamma-secretase complex plays a role in Notch and Wnt signaling cascades and regulation of downstream processes via its role in processing key regulatory proteins, and by regulating cytosolic CTNNB1 levels. PSENEN modulates both endoproteolysis of presenilin and gamma-secretase activity. In Mus musculus (Mouse), this protein is Gamma-secretase subunit PEN-2 (Psenen).